Here is a 41-residue protein sequence, read N- to C-terminus: Photosystem I reaction center subunit IX (41 aa).

The chain crosses the membrane as a helical span at residues 7–27 (YLSTAPVLLTLWMTFTAGFII).

This sequence belongs to the PsaJ family.

Its subcellular location is the plastid. The protein localises to the chloroplast thylakoid membrane. Its function is as follows. May help in the organization of the PsaE and PsaF subunits. This is Photosystem I reaction center subunit IX from Thalassiosira pseudonana (Marine diatom).